The primary structure comprises 58 residues: MAEVRLGENESIDSAIRRFKKKIQKAGILSEVKRRERYEKPSLRRKRKAEAARKGGRN.

The segment at 38–58 is disordered; it reads YEKPSLRRKRKAEAARKGGRN. Positions 49 to 58 are enriched in basic and acidic residues; that stretch reads AEAARKGGRN.

The protein belongs to the bacterial ribosomal protein bS21 family.

This is Small ribosomal subunit protein bS21A from Trichormus variabilis (strain ATCC 29413 / PCC 7937) (Anabaena variabilis).